The chain runs to 102 residues: Large ribosomal subunit protein uL24 (102 aa).

Belongs to the universal ribosomal protein uL24 family. Part of the 50S ribosomal subunit.

Functionally, one of two assembly initiator proteins, it binds directly to the 5'-end of the 23S rRNA, where it nucleates assembly of the 50S subunit. One of the proteins that surrounds the polypeptide exit tunnel on the outside of the subunit. In Paraburkholderia phytofirmans (strain DSM 17436 / LMG 22146 / PsJN) (Burkholderia phytofirmans), this protein is Large ribosomal subunit protein uL24.